Consider the following 827-residue polypeptide: Rho GTPase-activating protein 6 (827 aa).

Residues 18 to 125 form the PH domain; sequence TVYKSGPLFI…WKAALEQALA (108 aa). The region spanning 172 to 371 is the Rho-GAP domain; the sequence is LALEEIDGSP…ALLEDYGNMI (200 aa). 2 disordered regions span residues 379–437 and 517–561; these read CSTS…SDYA and YTTS…SSGN. A compositionally biased stretch (basic and acidic residues) spans 401–412; the sequence is IVVKHPDLHTLD. A compositionally biased stretch (acidic residues) spans 413 to 423; sequence IEEGETDDDND. Polar residues predominate over residues 517-543; sequence YTTSAEKPASKTTGSSTVNSKRSSSWG. Positions 560 to 684 form a coiled coil; it reads GNDELLIQRL…HQLSQQRQHH (125 aa).

In terms of biological role, acts as a GTPase activator for the Rac-type GTPase by converting it to an inactive GDP-bound state. This is Rho GTPase-activating protein 6 (ROPGAP6) from Arabidopsis thaliana (Mouse-ear cress).